Reading from the N-terminus, the 66-residue chain is Beta-toxin Cb1 (66 aa).

The region spanning 1 to 66 (KEGYIVNHST…VWPLPKKTCN (66 aa)) is the LCN-type CS-alpha/beta domain. 4 disulfides stabilise this stretch: cysteine 12-cysteine 65, cysteine 16-cysteine 41, cysteine 25-cysteine 46, and cysteine 29-cysteine 48.

This sequence belongs to the long (4 C-C) scorpion toxin superfamily. Sodium channel inhibitor family. Beta subfamily. As to expression, expressed by the venom gland.

It localises to the secreted. With respect to regulation, inhibited by human antibodies scFvs 10FG2 and LR. Functionally, beta toxins bind voltage-independently at site-4 of sodium channels (Nav) and reduces peak current and shifts the voltage of activation toward more negative potentials thereby affecting sodium channel activation and promoting spontaneous and repetitive firing. Has an inhibitory effect on voltage-gated sodium channel hNav1.6/SCN8A, affecting both the activation and inactivation processes. This toxin is active against mammals and lethal to mice. The chain is Beta-toxin Cb1 from Centruroides baergi (Scorpion).